A 303-amino-acid chain; its full sequence is UDP-3-O-acyl-N-acetylglucosamine deacetylase (303 aa).

The Zn(2+) site is built by histidine 78, histidine 237, and aspartate 241. Histidine 264 acts as the Proton donor in catalysis.

Belongs to the LpxC family. Requires Zn(2+) as cofactor.

It carries out the reaction a UDP-3-O-[(3R)-3-hydroxyacyl]-N-acetyl-alpha-D-glucosamine + H2O = a UDP-3-O-[(3R)-3-hydroxyacyl]-alpha-D-glucosamine + acetate. It participates in glycolipid biosynthesis; lipid IV(A) biosynthesis; lipid IV(A) from (3R)-3-hydroxytetradecanoyl-[acyl-carrier-protein] and UDP-N-acetyl-alpha-D-glucosamine: step 2/6. In terms of biological role, catalyzes the hydrolysis of UDP-3-O-myristoyl-N-acetylglucosamine to form UDP-3-O-myristoylglucosamine and acetate, the committed step in lipid A biosynthesis. The chain is UDP-3-O-acyl-N-acetylglucosamine deacetylase from Teredinibacter turnerae (strain ATCC 39867 / T7901).